We begin with the raw amino-acid sequence, 594 residues long: Elongation factor 4 (594 aa).

Positions 2 to 184 (KNIRNFSIIA…TIVAKVPAPE (183 aa)) constitute a tr-type G domain. GTP-binding positions include 14 to 19 (DHGKST) and 131 to 134 (NKID).

The protein belongs to the TRAFAC class translation factor GTPase superfamily. Classic translation factor GTPase family. LepA subfamily.

Its subcellular location is the cell inner membrane. The catalysed reaction is GTP + H2O = GDP + phosphate + H(+). Required for accurate and efficient protein synthesis under certain stress conditions. May act as a fidelity factor of the translation reaction, by catalyzing a one-codon backward translocation of tRNAs on improperly translocated ribosomes. Back-translocation proceeds from a post-translocation (POST) complex to a pre-translocation (PRE) complex, thus giving elongation factor G a second chance to translocate the tRNAs correctly. Binds to ribosomes in a GTP-dependent manner. In Francisella tularensis subsp. holarctica (strain FTNF002-00 / FTA), this protein is Elongation factor 4.